Here is a 274-residue protein sequence, read N- to C-terminus: Dermonecrotic toxin SaSicTox-betaIIB1 (274 aa).

His-5 is a catalytic residue. Residues Glu-25 and Asp-27 each contribute to the Mg(2+) site. The Nucleophile role is filled by His-41. Disulfide bonds link Cys-45–Cys-51 and Cys-47–Cys-190. Asp-85 contacts Mg(2+).

It belongs to the arthropod phospholipase D family. Class II subfamily. The cofactor is Mg(2+). As to expression, expressed by the venom gland.

It localises to the secreted. The enzyme catalyses an N-(acyl)-sphingosylphosphocholine = an N-(acyl)-sphingosyl-1,3-cyclic phosphate + choline. It carries out the reaction an N-(acyl)-sphingosylphosphoethanolamine = an N-(acyl)-sphingosyl-1,3-cyclic phosphate + ethanolamine. The catalysed reaction is a 1-acyl-sn-glycero-3-phosphocholine = a 1-acyl-sn-glycero-2,3-cyclic phosphate + choline. It catalyses the reaction a 1-acyl-sn-glycero-3-phosphoethanolamine = a 1-acyl-sn-glycero-2,3-cyclic phosphate + ethanolamine. Dermonecrotic toxins cleave the phosphodiester linkage between the phosphate and headgroup of certain phospholipids (sphingolipid and lysolipid substrates), forming an alcohol (often choline) and a cyclic phosphate. This toxin acts on sphingomyelin (SM). It may also act on ceramide phosphoethanolamine (CPE), lysophosphatidylcholine (LPC) and lysophosphatidylethanolamine (LPE), but not on lysophosphatidylserine (LPS), and lysophosphatidylglycerol (LPG). It acts by transphosphatidylation, releasing exclusively cyclic phosphate products as second products. Induces dermonecrosis, hemolysis, increased vascular permeability, edema, inflammatory response, and platelet aggregation. The polypeptide is Dermonecrotic toxin SaSicTox-betaIIB1 (Sicarius albospinosus (Six-eyed crab spider)).